A 303-amino-acid chain; its full sequence is MAVTKELLQMDLYALLGIEEKAADKEVKKAYRQKALSCHPDKNPDNPRAAELFHQLSQALEVLTDAAARAAYDKVRKARKQAAERTQRLDEKRKKVKLDLEARERQAQAQGTEEEEESRSTTTLEQEIARLREEGSRQLEEQQRLIQEQIRQDREQRLRGRTENTEGKGTPKLKLKWKCKKEDESQGGYSRDILLRLLQKYGEVLNLVLSKKKAGNAIVEFATVRAAELAVRNEVGLADNPLKVSWLEGQPQGTVDPSPPGLSKGSVLSERDYESLVMMRMRQAAERQQLIAQMQQEDEGRPT.

The region spanning 11–76 (DLYALLGIEE…AARAAYDKVR (66 aa)) is the J domain. Basic and acidic residues-rich tracts occupy residues 78-106 (ARKQ…RERQ) and 150-166 (IRQD…ENTE). Disordered regions lie at residues 78–124 (ARKQ…TTTL) and 150–170 (IRQD…GKGT). Residues 178 to 249 (KCKKEDESQG…NPLKVSWLEG (72 aa)) form the RRM domain. An N6-methyllysine modification is found at K264.

It localises to the cytoplasm. Its subcellular location is the nucleus. Its function is as follows. May negatively affect PAX8-induced thyroglobulin/TG transcription. This is DnaJ homolog subfamily C member 17 (Dnajc17) from Rattus norvegicus (Rat).